The primary structure comprises 151 residues: Cell division control protein 2 homolog 2 (151 aa).

In terms of domain architecture, Protein kinase spans 1 to 151 (ALKEIRMDNE…IMQTLQIESL (151 aa)). ATP is bound at residue Lys-3. Asp-113 functions as the Proton acceptor in the catalytic mechanism.

This sequence belongs to the protein kinase superfamily. CMGC Ser/Thr protein kinase family. CDC2/CDKX subfamily.

The catalysed reaction is L-seryl-[protein] + ATP = O-phospho-L-seryl-[protein] + ADP + H(+). The enzyme catalyses L-threonyl-[protein] + ATP = O-phospho-L-threonyl-[protein] + ADP + H(+). It catalyses the reaction [DNA-directed RNA polymerase] + ATP = phospho-[DNA-directed RNA polymerase] + ADP + H(+). The chain is Cell division control protein 2 homolog 2 from Pisum sativum (Garden pea).